A 270-amino-acid chain; its full sequence is Photosystem I chlorophyll a/b-binding protein 6, chloroplastic (270 aa).

The transit peptide at 1–33 directs the protein to the chloroplast; sequence MAFAIASALTSTLTLSTSRVQNPTQRRPHVAST. Positions 16 to 36 are disordered; that stretch reads STSRVQNPTQRRPHVASTSST. The span at 19-36 shows a compositional bias: polar residues; the sequence is RVQNPTQRRPHVASTSST. A chlorophyll b-binding site is contributed by W68. Residues F88 and E107 each coordinate chlorophyll a. R112 lines the chlorophyll b pocket. A helical membrane pass occupies residues 146 to 164; it reads YFADSTTLFVAQMVLMGWA. E165 and R168 together coordinate chlorophyll b. Chlorophyll a is bound by residues K221, E222, N225, R227, Q239, and H254. Residues 228-244 form a helical membrane-spanning segment; it reads LAMLAFLGFCFQATYTS.

It belongs to the light-harvesting chlorophyll a/b-binding (LHC) protein family. In terms of assembly, the LHC complex consists of chlorophyll a-b binding proteins. Homodimer. Binds pigments. Element of the NAD(P)H dehydrogenase-photosystem I supercomplex (NDH-PSI). Binds at least 14 chlorophylls (8 Chl-a and 6 Chl-b) and carotenoids such as lutein and neoxanthin. serves as cofactor. Photoregulated by reversible phosphorylation of its threonine residues.

The protein localises to the plastid. It is found in the chloroplast thylakoid membrane. In terms of biological role, the light-harvesting complex (LHC) functions as a light receptor, it captures and delivers excitation energy to photosystems with which it is closely associated. Seems involved in the function of the photosystem I in low light conditions, when other LHCA proteins are less abundant. Required, together with LHCA5, for the formation of a full-size NAD(P)H dehydrogenase-photosystem I supercomplex (NDH-PSI) that triggers cyclic and chlororespiratory electron transport in chloroplast thylakoids, especially under stress conditions (e.g. increased light intensity). The protein is Photosystem I chlorophyll a/b-binding protein 6, chloroplastic of Arabidopsis thaliana (Mouse-ear cress).